The chain runs to 430 residues: Enolase (430 aa).

Glutamine 167 contacts (2R)-2-phosphoglycerate. Catalysis depends on glutamate 209, which acts as the Proton donor. The Mg(2+) site is built by aspartate 245, glutamate 286, and aspartate 313. The (2R)-2-phosphoglycerate site is built by lysine 338, arginine 367, serine 368, and lysine 389. Residue lysine 338 is the Proton acceptor of the active site.

The protein belongs to the enolase family. Requires Mg(2+) as cofactor.

Its subcellular location is the cytoplasm. It is found in the secreted. The protein localises to the cell surface. It carries out the reaction (2R)-2-phosphoglycerate = phosphoenolpyruvate + H2O. It participates in carbohydrate degradation; glycolysis; pyruvate from D-glyceraldehyde 3-phosphate: step 4/5. Its function is as follows. Catalyzes the reversible conversion of 2-phosphoglycerate (2-PG) into phosphoenolpyruvate (PEP). It is essential for the degradation of carbohydrates via glycolysis. This Synechococcus sp. (strain WH7803) protein is Enolase.